The following is a 417-amino-acid chain: MFSFEKNSLKNTDKEIFDAIELEVKRQHEHVELIASENYASPAVMEAQGSQLTNKYAEGYHGKRYYGGCEFVDIAEKLAIERAQQLFGVDYANVQPHSGSQANAAVYNAVLKPGDTVLGMDLGAGGHLTHGSKVNFSGKIYNSIQYGLDENGDIDYKQVAQLAKEHKPKMIIAGFSAFSGIINWQKFREIADSVDAVLMADIAHVAGLVAAGVYPNPFPYVYVATTTTHKTLRGPRGGLILCNNNPELAKKFQSAIFPGIQGGPLMHVIAAKAVAFKEALEPSFVDYQKQVLKNAKAMEKVLKQRGINIISGGTSNHLLLLDITNTGFSGKEAEAALGRANITVNKNSIPNDPRSPFVTSGLRIGSPAITTRGFKEKECELVANLLADVVFNCGDEKVENETAAKVLDLCDKFPVYK.

Residues Leu-122 and Gly-126–Leu-128 contribute to the (6S)-5,6,7,8-tetrahydrofolate site. Position 230 is an N6-(pyridoxal phosphate)lysine (Lys-230). Residue Ser-355–Phe-357 coordinates (6S)-5,6,7,8-tetrahydrofolate.

It belongs to the SHMT family. Homodimer. Pyridoxal 5'-phosphate serves as cofactor.

The protein resides in the cytoplasm. The catalysed reaction is (6R)-5,10-methylene-5,6,7,8-tetrahydrofolate + glycine + H2O = (6S)-5,6,7,8-tetrahydrofolate + L-serine. The protein operates within one-carbon metabolism; tetrahydrofolate interconversion. It participates in amino-acid biosynthesis; glycine biosynthesis; glycine from L-serine: step 1/1. Catalyzes the reversible interconversion of serine and glycine with tetrahydrofolate (THF) serving as the one-carbon carrier. This reaction serves as the major source of one-carbon groups required for the biosynthesis of purines, thymidylate, methionine, and other important biomolecules. Also exhibits THF-independent aldolase activity toward beta-hydroxyamino acids, producing glycine and aldehydes, via a retro-aldol mechanism. This chain is Serine hydroxymethyltransferase, found in Francisella tularensis subsp. tularensis (strain FSC 198).